The sequence spans 155 residues: Transcriptional repressor NrdR (155 aa).

A zinc finger spans residues 3–34 (CPFCAANDTKVIDSRLVAEGDQVRRRRECVAC). Residues 49–139 (PRLIKQDGSR…VYRRFQDLNE (91 aa)) enclose the ATP-cone domain.

It belongs to the NrdR family. Requires Zn(2+) as cofactor.

Functionally, negatively regulates transcription of bacterial ribonucleotide reductase nrd genes and operons by binding to NrdR-boxes. The protein is Transcriptional repressor NrdR of Ectopseudomonas mendocina (strain ymp) (Pseudomonas mendocina).